We begin with the raw amino-acid sequence, 161 residues long: Putative pre-16S rRNA nuclease (161 aa).

Belongs to the YqgF nuclease family.

Its subcellular location is the cytoplasm. Functionally, could be a nuclease involved in processing of the 5'-end of pre-16S rRNA. This Methylocella silvestris (strain DSM 15510 / CIP 108128 / LMG 27833 / NCIMB 13906 / BL2) protein is Putative pre-16S rRNA nuclease.